The sequence spans 338 residues: Cytoskeleton protein RodZ (338 aa).

Residues 1 to 111 (MNTEATHDQN…LGKRRKKRDG (111 aa)) are Cytoplasmic-facing. An HTH cro/C1-type domain is found at 19–71 (LRNAREQLGLSQQAVAERLCLKVSTVRDIEEDKAPADLASTFLRGYIRSYARL). Positions 30-49 (QQAVAERLCLKVSTVRDIEE) form a DNA-binding region, H-T-H motif. A helical; Signal-anchor for type II membrane protein transmembrane segment spans residues 112–132 (WLMTFTWLVLFVVIGLSGAWW). Over 133–338 (WQDHKAQQEE…TLNAEQSPAQ (206 aa)) the chain is Periplasmic. A compositionally biased stretch (polar residues) spans 155–169 (NANGTNSQSIPLENS). Residues 155-240 (NANGTNSQSI…TTPDTATPLP (86 aa)) form a disordered region. Low complexity predominate over residues 170-188 (TTTVPEATPAPAAPVDTTA). The segment covering 203–217 (EPQQNAVVPPSQANV) has biased composition (polar residues). A compositionally biased stretch (low complexity) spans 218-240 (DTATTAPAAPATTTTPDTATPLP).

Belongs to the RodZ family.

The protein localises to the cell inner membrane. Its function is as follows. Cytoskeletal protein that is involved in cell-shape control through regulation of the length of the long axis. This Escherichia fergusonii (strain ATCC 35469 / DSM 13698 / CCUG 18766 / IAM 14443 / JCM 21226 / LMG 7866 / NBRC 102419 / NCTC 12128 / CDC 0568-73) protein is Cytoskeleton protein RodZ.